We begin with the raw amino-acid sequence, 347 residues long: GMP reductase (347 aa).

108–131 (TDFIKLSEILAKSEDLNFICIDIA) is an NADP(+) binding site. G181 and G183 together coordinate K(+). Residue C186 is the Thioimidate intermediate of the active site. 216–239 (IIGDGGCSCAGDVAKAFGGGADFV) is a binding site for NADP(+).

The protein belongs to the IMPDH/GMPR family. GuaC type 1 subfamily. Homotetramer.

The enzyme catalyses IMP + NH4(+) + NADP(+) = GMP + NADPH + 2 H(+). Its function is as follows. Catalyzes the irreversible NADPH-dependent deamination of GMP to IMP. It functions in the conversion of nucleobase, nucleoside and nucleotide derivatives of G to A nucleotides, and in maintaining the intracellular balance of A and G nucleotides. The protein is GMP reductase of Shewanella pealeana (strain ATCC 700345 / ANG-SQ1).